The following is a 277-amino-acid chain: Shikimate dehydrogenase (NADP(+)) (277 aa).

Shikimate-binding positions include 19–21 and Thr-66; that span reads SKS. The active-site Proton acceptor is the Lys-70. Position 82 (Asp-82) interacts with NADP(+). Shikimate is bound by residues Asn-91 and Asp-107. NADP(+) contacts are provided by residues 133 to 137, 157 to 162, and Leu-222; these read GAGGA and NRTRAR. Tyr-224 lines the shikimate pocket. Gly-245 provides a ligand contact to NADP(+).

This sequence belongs to the shikimate dehydrogenase family. As to quaternary structure, homodimer.

It carries out the reaction shikimate + NADP(+) = 3-dehydroshikimate + NADPH + H(+). It functions in the pathway metabolic intermediate biosynthesis; chorismate biosynthesis; chorismate from D-erythrose 4-phosphate and phosphoenolpyruvate: step 4/7. In terms of biological role, involved in the biosynthesis of the chorismate, which leads to the biosynthesis of aromatic amino acids. Catalyzes the reversible NADPH linked reduction of 3-dehydroshikimate (DHSA) to yield shikimate (SA). This is Shikimate dehydrogenase (NADP(+)) from Roseobacter denitrificans (strain ATCC 33942 / OCh 114) (Erythrobacter sp. (strain OCh 114)).